The following is a 415-amino-acid chain: Serine hydroxymethyltransferase (415 aa).

(6S)-5,6,7,8-tetrahydrofolate is bound by residues Leu-121 and 125–127 (GHL). Lys-230 is modified (N6-(pyridoxal phosphate)lysine). Position 355–357 (355–357 (SPF)) interacts with (6S)-5,6,7,8-tetrahydrofolate.

Belongs to the SHMT family. As to quaternary structure, homodimer. Requires pyridoxal 5'-phosphate as cofactor.

The protein localises to the cytoplasm. It carries out the reaction (6R)-5,10-methylene-5,6,7,8-tetrahydrofolate + glycine + H2O = (6S)-5,6,7,8-tetrahydrofolate + L-serine. It functions in the pathway one-carbon metabolism; tetrahydrofolate interconversion. It participates in amino-acid biosynthesis; glycine biosynthesis; glycine from L-serine: step 1/1. Its function is as follows. Catalyzes the reversible interconversion of serine and glycine with tetrahydrofolate (THF) serving as the one-carbon carrier. This reaction serves as the major source of one-carbon groups required for the biosynthesis of purines, thymidylate, methionine, and other important biomolecules. Also exhibits THF-independent aldolase activity toward beta-hydroxyamino acids, producing glycine and aldehydes, via a retro-aldol mechanism. The protein is Serine hydroxymethyltransferase of Lactococcus lactis subsp. cremoris (strain MG1363).